Here is a 454-residue protein sequence, read N- to C-terminus: tRNA modification GTPase MnmE (454 aa).

Positions 23, 80, and 120 each coordinate (6S)-5-formyl-5,6,7,8-tetrahydrofolate. The 162-residue stretch at 216-377 (GMKVVIAGRP…LRNHLKQSMG (162 aa)) folds into the TrmE-type G domain. Asn-226 contacts K(+). GTP-binding positions include 226 to 231 (NAGKSS), 245 to 251 (TDIAGTT), 270 to 273 (DTAG), 335 to 338 (NKAD), and 358 to 360 (SAR). Ser-230 contacts Mg(2+). Positions 245, 247, and 250 each coordinate K(+). Thr-251 lines the Mg(2+) pocket. Lys-454 contributes to the (6S)-5-formyl-5,6,7,8-tetrahydrofolate binding site.

The protein belongs to the TRAFAC class TrmE-Era-EngA-EngB-Septin-like GTPase superfamily. TrmE GTPase family. In terms of assembly, homodimer. Heterotetramer of two MnmE and two MnmG subunits. The cofactor is K(+).

It localises to the cytoplasm. Its function is as follows. Exhibits a very high intrinsic GTPase hydrolysis rate. Involved in the addition of a carboxymethylaminomethyl (cmnm) group at the wobble position (U34) of certain tRNAs, forming tRNA-cmnm(5)s(2)U34. This Escherichia coli O7:K1 (strain IAI39 / ExPEC) protein is tRNA modification GTPase MnmE.